A 36-amino-acid chain; its full sequence is MKAFSPVRSIRKNSLLDHRLGISQSKTPVDDLMSLL.

The polypeptide is Putative DNA-binding protein inhibitor ID-2B (ID2B) (Homo sapiens (Human)).